The primary structure comprises 257 residues: uncharacterized protein (257 aa).

An ATP-binding site is contributed by 7–14 (GKGGVGKT).

The protein to M.jannaschii MJ0084 and MJ0685.

This is an uncharacterized protein from Methanocaldococcus jannaschii (strain ATCC 43067 / DSM 2661 / JAL-1 / JCM 10045 / NBRC 100440) (Methanococcus jannaschii).